A 490-amino-acid chain; its full sequence is GTPase Der (490 aa).

2 consecutive EngA-type G domains span residues P3–L166 and I203–T376. GTP contacts are provided by residues G9 to S16, D56 to I60, N118 to D121, G209 to S216, D256 to V260, and N321 to D324. In terms of domain architecture, KH-like spans R377 to E461.

The protein belongs to the TRAFAC class TrmE-Era-EngA-EngB-Septin-like GTPase superfamily. EngA (Der) GTPase family. In terms of assembly, associates with the 50S ribosomal subunit.

In terms of biological role, GTPase that plays an essential role in the late steps of ribosome biogenesis. The polypeptide is GTPase Der (Escherichia coli O17:K52:H18 (strain UMN026 / ExPEC)).